A 119-amino-acid polypeptide reads, in one-letter code: Putative mating-type protein A2 (119 aa).

The homeobox; TALE-type DNA-binding region spans 38-100; sequence KPYRGHRFTK…NRRRKEKTIT (63 aa).

The protein belongs to the TALE/M-ATYP homeobox family.

Its subcellular location is the nucleus. Its function is as follows. Probably not a functional protein. Cells lacking A2 show no obvious alterations in mating, sporulation and cell growth. The polypeptide is Putative mating-type protein A2 (MATA2) (Saccharomyces cerevisiae (Baker's yeast)).